The sequence spans 715 residues: L-type lectin-domain containing receptor kinase VIII.1 (715 aa).

The first 21 residues, 1–21 (MSLFLSFFISILLCFFNGATT), serve as a signal peptide directing secretion. The tract at residues 22–247 (TQFDFSTLAI…IHSIEWWSFS (226 aa)) is legume-lectin like. At 22–317 (TQFDFSTLAI…SRFCKENPGT (296 aa)) the chain is on the extracellular side. 2 N-linked (GlcNAc...) asparagine glycosylation sites follow: Asn126 and Asn195. Residues 255–296 (GSGSGSPPPRANLMNPKANSVKSPPPLASQPSSSAIPISSNT) form a disordered region. Low complexity predominate over residues 283-296 (SQPSSSAIPISSNT). Residues 318 to 338 (IAGVVTAGAFFLALFAGALFW) form a helical membrane-spanning segment. Topologically, residues 339–715 (VYSKKFKRVE…IIRSDDDHLV (377 aa)) are cytoplasmic. Residues 376 to 676 (FNESRIIGHG…MSFSTSHLLL (301 aa)) enclose the Protein kinase domain. Residues 382 to 390 (IGHGAFGVV) and Lys405 contribute to the ATP site. Asp500 functions as the Proton acceptor in the catalytic mechanism.

The protein in the C-terminal section; belongs to the protein kinase superfamily. Ser/Thr protein kinase family. It in the N-terminal section; belongs to the leguminous lectin family.

It is found in the cell membrane. It catalyses the reaction L-seryl-[protein] + ATP = O-phospho-L-seryl-[protein] + ADP + H(+). The enzyme catalyses L-threonyl-[protein] + ATP = O-phospho-L-threonyl-[protein] + ADP + H(+). The chain is L-type lectin-domain containing receptor kinase VIII.1 (LECRK81) from Arabidopsis thaliana (Mouse-ear cress).